We begin with the raw amino-acid sequence, 195 residues long: Protein GrpE (195 aa).

The segment covering 1 to 20 has biased composition (basic and acidic residues); it reads MSSKEQKTPDEQVLDQKEAA. The interval 1 to 40 is disordered; it reads MSSKEQKTPDEQVLDQKEAAKGQQADAAPETADVADPRDE.

Belongs to the GrpE family. As to quaternary structure, homodimer.

It is found in the cytoplasm. Participates actively in the response to hyperosmotic and heat shock by preventing the aggregation of stress-denatured proteins, in association with DnaK and GrpE. It is the nucleotide exchange factor for DnaK and may function as a thermosensor. Unfolded proteins bind initially to DnaJ; upon interaction with the DnaJ-bound protein, DnaK hydrolyzes its bound ATP, resulting in the formation of a stable complex. GrpE releases ADP from DnaK; ATP binding to DnaK triggers the release of the substrate protein, thus completing the reaction cycle. Several rounds of ATP-dependent interactions between DnaJ, DnaK and GrpE are required for fully efficient folding. This chain is Protein GrpE, found in Pectobacterium atrosepticum (strain SCRI 1043 / ATCC BAA-672) (Erwinia carotovora subsp. atroseptica).